Reading from the N-terminus, the 193-residue chain is Ion-translocating oxidoreductase complex subunit A (193 aa).

The next 6 helical transmembrane spans lie at 5 to 25 (FFFI…FLGL), 47 to 67 (FVVV…LLPF), 72 to 92 (LRII…EIIL), 102 to 122 (ILGI…IPLF), 134 to 154 (ILYA…FSSI), and 171 to 191 (PIVL…KGLV).

Belongs to the NqrDE/RnfAE family. The complex is composed of six subunits: RnfA, RnfB, RnfC, RnfD, RnfE and RnfG.

It is found in the cell inner membrane. Functionally, part of a membrane-bound complex that couples electron transfer with translocation of ions across the membrane. The polypeptide is Ion-translocating oxidoreductase complex subunit A (Buchnera aphidicola subsp. Schizaphis graminum (strain Sg)).